The following is a 464-amino-acid chain: Soluble pyridine nucleotide transhydrogenase (464 aa).

35-44 (DSRRQVGGNC) contributes to the FAD binding site.

This sequence belongs to the class-I pyridine nucleotide-disulfide oxidoreductase family. The cofactor is FAD.

It localises to the cytoplasm. The enzyme catalyses NAD(+) + NADPH = NADH + NADP(+). Its function is as follows. Conversion of NADPH, generated by peripheral catabolic pathways, to NADH, which can enter the respiratory chain for energy generation. In Pseudomonas fluorescens (strain SBW25), this protein is Soluble pyridine nucleotide transhydrogenase.